The chain runs to 197 residues: Probable host range protein 2 (197 aa).

The segment at aspartate 172–glutamate 197 is disordered. The segment covering aspartate 174–glutamate 197 has biased composition (acidic residues).

It belongs to the poxviridae C7 protein family.

In Ovis aries (Sheep), this protein is Probable host range protein 2.